A 287-amino-acid polypeptide reads, in one-letter code: ATP synthase gamma chain (287 aa).

This sequence belongs to the ATPase gamma chain family. F-type ATPases have 2 components, CF(1) - the catalytic core - and CF(0) - the membrane proton channel. CF(1) has five subunits: alpha(3), beta(3), gamma(1), delta(1), epsilon(1). CF(0) has three main subunits: a, b and c.

It is found in the cell inner membrane. Its function is as follows. Produces ATP from ADP in the presence of a proton gradient across the membrane. The gamma chain is believed to be important in regulating ATPase activity and the flow of protons through the CF(0) complex. This Escherichia coli (strain 55989 / EAEC) protein is ATP synthase gamma chain.